We begin with the raw amino-acid sequence, 289 residues long: Pyridoxal kinase PdxY (289 aa).

Residues serine 9 and 44-45 (TQ) each bind substrate. Residues aspartate 112, valine 144, glutamate 149, and lysine 182 each contribute to the ATP site. Aspartate 221 provides a ligand contact to substrate.

This sequence belongs to the pyridoxine kinase family. PdxY subfamily. Homodimer. Requires Mg(2+) as cofactor.

The enzyme catalyses pyridoxal + ATP = pyridoxal 5'-phosphate + ADP + H(+). The protein operates within cofactor metabolism; pyridoxal 5'-phosphate salvage; pyridoxal 5'-phosphate from pyridoxal: step 1/1. Its function is as follows. Pyridoxal kinase involved in the salvage pathway of pyridoxal 5'-phosphate (PLP). Catalyzes the phosphorylation of pyridoxal to PLP. The protein is Pyridoxal kinase PdxY of Vibrio campbellii (strain ATCC BAA-1116).